Reading from the N-terminus, the 607-residue chain is Zinc finger CCCH domain-containing protein 66 (607 aa).

2 ANK repeats span residues 57–87 (EERT…DVNR) and 92–124 (DGAT…NPDS). The segment covering 161–178 (LNEVNGQEESEPEVEVEV) has biased composition (acidic residues). The interval 161–193 (LNEVNGQEESEPEVEVEVEVSPPRGSERKEYPV) is disordered. 2 C3H1-type zinc fingers span residues 254–276 (PCPE…HGIF) and 284–308 (QYRT…HKPE). The disordered stretch occupies residues 342–363 (ISPLPIGATTTPPLSPNGVSSP). Residues 349 to 361 (ATTTPPLSPNGVS) are compositionally biased toward polar residues.

The polypeptide is Zinc finger CCCH domain-containing protein 66 (Arabidopsis thaliana (Mouse-ear cress)).